Here is a 1002-residue protein sequence, read N- to C-terminus: ToxR-activated gene A lipoprotein (1002 aa).

The signal sequence occupies residues 1–21; it reads MVVRYSLLMKVSFAILIFLVG. The N-palmitoyl cysteine moiety is linked to residue cysteine 22. Cysteine 22 carries the S-diacylglycerol cysteine lipid modification. Residues 31 to 53 form a disordered region; that stretch reads DQYLTDPDISEQTKKPSRPIIDE. The Fibronectin type-III domain occupies 45–139; that stretch reads KPSRPIIDEK…KIEFITLNEI (95 aa). The 255-residue stretch at 282–536 folds into the Peptidase M66 domain; the sequence is ELIIQNIDLG…QDWLKNGAVV (255 aa). Histidine 432 is a Zn(2+) binding site. The active site involves glutamate 433. Histidine 436 and histidine 442 together coordinate Zn(2+).

It depends on Zn(2+) as a cofactor.

It localises to the cell membrane. In Vibrio cholerae serotype O1 (strain ATCC 39315 / El Tor Inaba N16961), this protein is ToxR-activated gene A lipoprotein (tagA).